Reading from the N-terminus, the 518-residue chain is Coiled-coil domain-containing protein 82 (518 aa).

The segment covering 1-14 (MVHVRRHETRKNSK) has biased composition (basic residues). The segment at 1–266 (MVHVRRHETR…EDDYRYDEDG (266 aa)) is disordered. Over residues 16–27 (QKPEQKSRVDWH) the composition is skewed to basic and acidic residues. A compositionally biased stretch (acidic residues) spans 38 to 67 (DSDEELDSNEELDSDEEHDSGESIDSDEEL). Over residues 68-89 (DISKKSDINELPEKETELKLIK) the composition is skewed to basic and acidic residues. The segment covering 92 to 107 (SQGSNSKHLTNTSNSS) has biased composition (polar residues). A compositionally biased stretch (basic and acidic residues) spans 111-127 (EQLKETKHNDLPDDEAH). Serine 170 and serine 194 each carry phosphoserine. Over residues 191–201 (DECSSLEMEQE) the composition is skewed to acidic residues. Threonine 202 carries the post-translational modification Phosphothreonine. Residues 204 to 232 (EKSSAARKREYHQKLQELSERSRQRRRRN) are a coiled coil. A compositionally biased stretch (basic and acidic residues) spans 215–225 (HQKLQELSERS). Residues 249-266 (GEEDEDEDEDDYRYDEDG) are compositionally biased toward acidic residues. A Phosphoserine modification is found at serine 305.

In Mus musculus (Mouse), this protein is Coiled-coil domain-containing protein 82 (Ccdc82).